Here is a 213-residue protein sequence, read N- to C-terminus: Thiamine-phosphate synthase (213 aa).

4-amino-2-methyl-5-(diphosphooxymethyl)pyrimidine is bound by residues 40–44 (QFREK) and N75. Mg(2+) contacts are provided by D76 and D95. S113 lines the 4-amino-2-methyl-5-(diphosphooxymethyl)pyrimidine pocket. Position 139-141 (139-141 (TPS)) interacts with 2-[(2R,5Z)-2-carboxy-4-methylthiazol-5(2H)-ylidene]ethyl phosphate. K142 lines the 4-amino-2-methyl-5-(diphosphooxymethyl)pyrimidine pocket. Residues G171 and 191-192 (IS) each bind 2-[(2R,5Z)-2-carboxy-4-methylthiazol-5(2H)-ylidene]ethyl phosphate.

It belongs to the thiamine-phosphate synthase family. It depends on Mg(2+) as a cofactor.

It carries out the reaction 2-[(2R,5Z)-2-carboxy-4-methylthiazol-5(2H)-ylidene]ethyl phosphate + 4-amino-2-methyl-5-(diphosphooxymethyl)pyrimidine + 2 H(+) = thiamine phosphate + CO2 + diphosphate. The enzyme catalyses 2-(2-carboxy-4-methylthiazol-5-yl)ethyl phosphate + 4-amino-2-methyl-5-(diphosphooxymethyl)pyrimidine + 2 H(+) = thiamine phosphate + CO2 + diphosphate. It catalyses the reaction 4-methyl-5-(2-phosphooxyethyl)-thiazole + 4-amino-2-methyl-5-(diphosphooxymethyl)pyrimidine + H(+) = thiamine phosphate + diphosphate. It participates in cofactor biosynthesis; thiamine diphosphate biosynthesis; thiamine phosphate from 4-amino-2-methyl-5-diphosphomethylpyrimidine and 4-methyl-5-(2-phosphoethyl)-thiazole: step 1/1. Its function is as follows. Condenses 4-methyl-5-(beta-hydroxyethyl)thiazole monophosphate (THZ-P) and 2-methyl-4-amino-5-hydroxymethyl pyrimidine pyrophosphate (HMP-PP) to form thiamine monophosphate (TMP). The chain is Thiamine-phosphate synthase from Staphylococcus aureus (strain MRSA252).